Reading from the N-terminus, the 572-residue chain is Phosphoenolpyruvate-protein phosphotransferase (572 aa).

The Tele-phosphohistidine intermediate role is filled by His-191. The phosphoenolpyruvate site is built by Arg-298 and Arg-334. Mg(2+)-binding residues include Glu-433 and Asp-457. Residues 456-457 and Arg-467 each bind phosphoenolpyruvate; that span reads ND. The active-site Proton donor is the Cys-504.

This sequence belongs to the PEP-utilizing enzyme family. Homodimer. Mg(2+) serves as cofactor.

The protein resides in the cytoplasm. It catalyses the reaction L-histidyl-[protein] + phosphoenolpyruvate = N(pros)-phospho-L-histidyl-[protein] + pyruvate. Functionally, general (non sugar-specific) component of the phosphoenolpyruvate-dependent sugar phosphotransferase system (sugar PTS). This major carbohydrate active-transport system catalyzes the phosphorylation of incoming sugar substrates concomitantly with their translocation across the cell membrane. Enzyme I transfers the phosphoryl group from phosphoenolpyruvate (PEP) to the phosphoryl carrier protein (HPr). The protein is Phosphoenolpyruvate-protein phosphotransferase (ptsI) of Staphylococcus aureus (strain Mu50 / ATCC 700699).